Consider the following 91-residue polypeptide: Putative 26S proteasome complex subunit sem-1 (91 aa).

Positions 1 to 73 (MASTQPKNDA…SWDDDDTSDD (73 aa)) are disordered. Residues 8–28 (NDAKSTEPKPEQPVTEKKTAV) are compositionally biased toward basic and acidic residues. Acidic residues-rich tracts occupy residues 29–48 (LEEDDEFEDFPVDDWEAEDT) and 63–72 (ESWDDDDTSD).

It belongs to the DSS1/SEM1 family. As to quaternary structure, part of the 26S proteasome.

Functionally, subunit of the 26S proteasome which plays a role in ubiquitin-dependent proteolysis. This is Putative 26S proteasome complex subunit sem-1 (sem-1) from Neurospora crassa (strain ATCC 24698 / 74-OR23-1A / CBS 708.71 / DSM 1257 / FGSC 987).